Here is a 205-residue protein sequence, read N- to C-terminus: Thymidine kinase (205 aa).

ATP is bound by residues 9-16 (SAMNAGKS) and 87-90 (DESQ). Catalysis depends on glutamate 88, which acts as the Proton acceptor. Zn(2+)-binding residues include cysteine 145, cysteine 147, cysteine 182, and histidine 185.

This sequence belongs to the thymidine kinase family. As to quaternary structure, homotetramer.

It localises to the cytoplasm. The catalysed reaction is thymidine + ATP = dTMP + ADP + H(+). This is Thymidine kinase from Salmonella paratyphi A (strain ATCC 9150 / SARB42).